The following is a 276-amino-acid chain: Undecaprenyl-diphosphatase 2 (276 aa).

8 consecutive transmembrane segments (helical) span residues 1–21 (MSLW…LFPV), 44–64 (QLLP…LWYF), 87–107 (GHLM…GLLL), 114–134 (VFHD…LLWL), 150–170 (MTFK…IPGF), 190–210 (AAEF…VLEL), 222–242 (DALL…RFLM), and 251–271 (LASF…WFML).

The protein belongs to the UppP family.

Its subcellular location is the cell inner membrane. It carries out the reaction di-trans,octa-cis-undecaprenyl diphosphate + H2O = di-trans,octa-cis-undecaprenyl phosphate + phosphate + H(+). Functionally, catalyzes the dephosphorylation of undecaprenyl diphosphate (UPP). Confers resistance to bacitracin. This is Undecaprenyl-diphosphatase 2 from Burkholderia lata (strain ATCC 17760 / DSM 23089 / LMG 22485 / NCIMB 9086 / R18194 / 383).